Consider the following 176-residue polypeptide: Lipoprotein signal peptidase (176 aa).

Transmembrane regions (helical) follow at residues L26–V46, F60–G80, W82–L102, and G107–V127. Catalysis depends on residues D137 and D155. Residues H147–V167 traverse the membrane as a helical segment.

This sequence belongs to the peptidase A8 family.

It localises to the cell inner membrane. It catalyses the reaction Release of signal peptides from bacterial membrane prolipoproteins. Hydrolyzes -Xaa-Yaa-Zaa-|-(S,diacylglyceryl)Cys-, in which Xaa is hydrophobic (preferably Leu), and Yaa (Ala or Ser) and Zaa (Gly or Ala) have small, neutral side chains.. Its pathway is protein modification; lipoprotein biosynthesis (signal peptide cleavage). This protein specifically catalyzes the removal of signal peptides from prolipoproteins. The polypeptide is Lipoprotein signal peptidase (Cupriavidus pinatubonensis (strain JMP 134 / LMG 1197) (Cupriavidus necator (strain JMP 134))).